Here is a 342-residue protein sequence, read N- to C-terminus: N-acetyl-gamma-glutamyl-phosphate reductase (342 aa).

Residue Cys-149 is part of the active site.

This sequence belongs to the NAGSA dehydrogenase family. Type 1 subfamily.

It localises to the cytoplasm. The catalysed reaction is N-acetyl-L-glutamate 5-semialdehyde + phosphate + NADP(+) = N-acetyl-L-glutamyl 5-phosphate + NADPH + H(+). It functions in the pathway amino-acid biosynthesis; L-arginine biosynthesis; N(2)-acetyl-L-ornithine from L-glutamate: step 3/4. In terms of biological role, catalyzes the NADPH-dependent reduction of N-acetyl-5-glutamyl phosphate to yield N-acetyl-L-glutamate 5-semialdehyde. This Rhodobacter capsulatus (strain ATCC BAA-309 / NBRC 16581 / SB1003) protein is N-acetyl-gamma-glutamyl-phosphate reductase.